Reading from the N-terminus, the 848-residue chain is Leucine--tRNA ligase (848 aa).

The 'HIGH' region motif lies at 41–51; the sequence is PYPSGRIHMGH. Positions 619–623 match the 'KMSKS' region motif; that stretch reads KMSKS. Lys622 serves as a coordination point for ATP.

Belongs to the class-I aminoacyl-tRNA synthetase family.

Its subcellular location is the cytoplasm. It catalyses the reaction tRNA(Leu) + L-leucine + ATP = L-leucyl-tRNA(Leu) + AMP + diphosphate. This chain is Leucine--tRNA ligase, found in Roseobacter denitrificans (strain ATCC 33942 / OCh 114) (Erythrobacter sp. (strain OCh 114)).